The following is a 103-amino-acid chain: Histone H4 (103 aa).

Residues 1–14 (MTGRGKGGKGLGKG) show a composition bias toward gly residues. Positions 1-20 (MTGRGKGGKGLGKGGAKRHR) are disordered. Thr-2 is modified (N-acetylthreonine). An N6-acetyl-N6-methyllysine; alternate modification is found at Lys-6. Lys-6, Lys-9, Lys-13, and Lys-17 each carry N6-acetyllysine. The residue at position 13 (Lys-13) is an N6-acetyl-N6-methyllysine; alternate. An N6,N6-dimethyllysine modification is found at Lys-21. Lys-32 carries the N6-methyllysine modification.

This sequence belongs to the histone H4 family. As to quaternary structure, the nucleosome is a histone octamer containing two molecules each of H2A, H2B, H3 and H4 assembled in one H3-H4 heterotetramer and two H2A-H2B heterodimers. The octamer wraps approximately 147 bp of DNA.

The protein resides in the nucleus. The protein localises to the chromosome. Functionally, core component of nucleosome. Nucleosomes wrap and compact DNA into chromatin, limiting DNA accessibility to the cellular machineries which require DNA as a template. Histones thereby play a central role in transcription regulation, DNA repair, DNA replication and chromosomal stability. DNA accessibility is regulated via a complex set of post-translational modifications of histones, also called histone code, and nucleosome remodeling. A mixture of histones H2B and H4 has antimicrobial activity against the Gram-positive bacterium M.luteus. In Penaeus vannamei (Whiteleg shrimp), this protein is Histone H4.